The primary structure comprises 282 residues: Bifunctional protein FolD (282 aa).

NADP(+) is bound by residues Gly-164–Ser-166, Ile-189, and Ile-230.

It belongs to the tetrahydrofolate dehydrogenase/cyclohydrolase family. In terms of assembly, homodimer.

The catalysed reaction is (6R)-5,10-methylene-5,6,7,8-tetrahydrofolate + NADP(+) = (6R)-5,10-methenyltetrahydrofolate + NADPH. It catalyses the reaction (6R)-5,10-methenyltetrahydrofolate + H2O = (6R)-10-formyltetrahydrofolate + H(+). It participates in one-carbon metabolism; tetrahydrofolate interconversion. Its function is as follows. Catalyzes the oxidation of 5,10-methylenetetrahydrofolate to 5,10-methenyltetrahydrofolate and then the hydrolysis of 5,10-methenyltetrahydrofolate to 10-formyltetrahydrofolate. The sequence is that of Bifunctional protein FolD from Campylobacter jejuni subsp. jejuni serotype O:6 (strain 81116 / NCTC 11828).